We begin with the raw amino-acid sequence, 523 residues long: Vanin-like protein 3 (523 aa).

The signal sequence occupies residues 1–19 (MAVFLRRFLWLISFTLVLT). The CN hydrolase domain occupies 29-298 (YIAGVVEYRP…RKLLLAKVPL (270 aa)). N64 carries N-linked (GlcNAc...) asparagine glycosylation. Residue E74 is the Proton acceptor of the active site. The Proton donor role is filled by K167. N177 and N192 each carry an N-linked (GlcNAc...) asparagine glycan. C200 serves as the catalytic Nucleophile. N-linked (GlcNAc...) asparagine glycans are attached at residues N330 and N468. N498 is lipidated: GPI-anchor amidated asparagine. Positions 499–523 (GGAGRLGTLLFLLITPLIMMHLFRE) are cleaved as a propeptide — removed in mature form.

This sequence belongs to the carbon-nitrogen hydrolase superfamily. BTD/VNN family. Expressed in third instar larvae.

It localises to the cell membrane. The protein is Vanin-like protein 3 of Drosophila melanogaster (Fruit fly).